Consider the following 218-residue polypeptide: uncharacterized protein (218 aa).

The N-terminal 28 residues, 1 to 28 (MLSLQCLPPFFISVPNRSTNSCSTAPLR), are a transit peptide targeting the chloroplast.

It belongs to the SixA phosphatase family.

It localises to the plastid. The protein resides in the chloroplast. This is an uncharacterized protein from Arabidopsis thaliana (Mouse-ear cress).